The primary structure comprises 303 residues: N-acetyl-D-glucosamine kinase (303 aa).

ATP is bound by residues 4–11 and 133–140; these read GFDVGGTK and GFGGGLIY. 4 residues coordinate Zn(2+): His-157, Cys-177, Cys-179, and Cys-184.

It belongs to the ROK (NagC/XylR) family. NagK subfamily.

The enzyme catalyses N-acetyl-D-glucosamine + ATP = N-acetyl-D-glucosamine 6-phosphate + ADP + H(+). It participates in cell wall biogenesis; peptidoglycan recycling. Catalyzes the phosphorylation of N-acetyl-D-glucosamine (GlcNAc) derived from cell-wall degradation, yielding GlcNAc-6-P. This Vibrio vulnificus (strain CMCP6) protein is N-acetyl-D-glucosamine kinase.